The primary structure comprises 382 residues: uncharacterized protein (382 aa).

Helical transmembrane passes span 8–28 (VLLL…LNTL), 41–61 (WQVG…TLIA), 73–93 (SYHC…LTVD), 94–114 (FWSW…IWVI), 133–153 (AAYM…LGIV), 157–177 (LLSV…PLLF), 208–228 (GCII…LYLS), 274–294 (VVIL…ALFI), 325–345 (ALLM…SLLM), and 349–369 (SDNL…MMLL).

It belongs to the major facilitator superfamily. YcaD (TC 2.A.1.26) family.

It is found in the cell inner membrane. This is an uncharacterized protein from Yersinia pseudotuberculosis serotype O:3 (strain YPIII).